A 222-amino-acid polypeptide reads, in one-letter code: Large ribosomal subunit protein uL1 (222 aa).

Belongs to the universal ribosomal protein uL1 family. In terms of assembly, part of the 50S ribosomal subunit.

Functionally, binds directly to 23S rRNA. Probably involved in E site tRNA release. In terms of biological role, protein L1 is also a translational repressor protein, it controls the translation of its operon by binding to its mRNA. In Pyrobaculum islandicum (strain DSM 4184 / JCM 9189 / GEO3), this protein is Large ribosomal subunit protein uL1.